The sequence spans 390 residues: Trehalose-phosphate phosphatase (390 aa).

Catalysis depends on aspartate 150, which acts as the Nucleophile. Residues aspartate 150, aspartate 152, and aspartate 333 each contribute to the Mg(2+) site. Position 150–152 (150–152) interacts with substrate; it reads DFD.

It belongs to the trehalose phosphatase family. The cofactor is Mg(2+).

The catalysed reaction is alpha,alpha-trehalose 6-phosphate + H2O = alpha,alpha-trehalose + phosphate. It functions in the pathway glycan biosynthesis; trehalose biosynthesis. Functionally, removes the phosphate from trehalose 6-phosphate to produce free trehalose. The protein is Trehalose-phosphate phosphatase (otsB) of Mycobacterium ulcerans (strain Agy99).